Here is a 422-residue protein sequence, read N- to C-terminus: Exodeoxyribonuclease 7 large subunit (422 aa).

This sequence belongs to the XseA family. Heterooligomer composed of large and small subunits.

It localises to the cytoplasm. It catalyses the reaction Exonucleolytic cleavage in either 5'- to 3'- or 3'- to 5'-direction to yield nucleoside 5'-phosphates.. Functionally, bidirectionally degrades single-stranded DNA into large acid-insoluble oligonucleotides, which are then degraded further into small acid-soluble oligonucleotides. In Leptospira interrogans serogroup Icterohaemorrhagiae serovar copenhageni (strain Fiocruz L1-130), this protein is Exodeoxyribonuclease 7 large subunit.